The chain runs to 547 residues: CTP synthase (547 aa).

The interval 1–273 (MNNKKLKSKF…DHFILNHFQL (273 aa)) is amidoligase domain. CTP is bound at residue Ser-19. Ser-19 contributes to the UTP binding site. 20–25 (SLGKGI) contributes to the ATP binding site. Tyr-60 is a binding site for L-glutamine. Asp-77 contacts ATP. 2 residues coordinate Mg(2+): Asp-77 and Glu-147. CTP contacts are provided by residues 154 to 156 (DIE), 194 to 199 (KTKPTQ), and Lys-230. UTP contacts are provided by residues 194–199 (KTKPTQ) and Lys-230. One can recognise a Glutamine amidotransferase type-1 domain in the interval 306–539 (YVILHDAYLS…VEAALLKNGK (234 aa)). Gly-361 is an L-glutamine binding site. Residue Cys-388 is the Nucleophile; for glutamine hydrolysis of the active site. L-glutamine contacts are provided by residues 389-392 (FGMQ), Glu-412, and Arg-466. Residues His-512 and Glu-514 contribute to the active site.

It belongs to the CTP synthase family. Homotetramer.

It catalyses the reaction UTP + L-glutamine + ATP + H2O = CTP + L-glutamate + ADP + phosphate + 2 H(+). The enzyme catalyses L-glutamine + H2O = L-glutamate + NH4(+). The catalysed reaction is UTP + NH4(+) + ATP = CTP + ADP + phosphate + 2 H(+). It participates in pyrimidine metabolism; CTP biosynthesis via de novo pathway; CTP from UDP: step 2/2. Its activity is regulated as follows. Allosterically activated by GTP, when glutamine is the substrate; GTP has no effect on the reaction when ammonia is the substrate. The allosteric effector GTP functions by stabilizing the protein conformation that binds the tetrahedral intermediate(s) formed during glutamine hydrolysis. Inhibited by the product CTP, via allosteric rather than competitive inhibition. In terms of biological role, catalyzes the ATP-dependent amination of UTP to CTP with either L-glutamine or ammonia as the source of nitrogen. Regulates intracellular CTP levels through interactions with the four ribonucleotide triphosphates. This Phytoplasma australiense protein is CTP synthase.